A 384-amino-acid chain; its full sequence is Succinyl-diaminopimelate desuccinylase (384 aa).

Zn(2+) is bound at residue His-71. Asp-73 is an active-site residue. Position 104 (Asp-104) interacts with Zn(2+). The active-site Proton acceptor is Glu-138. Residues Glu-139, Glu-167, and His-353 each coordinate Zn(2+).

This sequence belongs to the peptidase M20A family. DapE subfamily. In terms of assembly, homodimer. Zn(2+) is required as a cofactor. It depends on Co(2+) as a cofactor.

The catalysed reaction is N-succinyl-(2S,6S)-2,6-diaminopimelate + H2O = (2S,6S)-2,6-diaminopimelate + succinate. It participates in amino-acid biosynthesis; L-lysine biosynthesis via DAP pathway; LL-2,6-diaminopimelate from (S)-tetrahydrodipicolinate (succinylase route): step 3/3. In terms of biological role, catalyzes the hydrolysis of N-succinyl-L,L-diaminopimelic acid (SDAP), forming succinate and LL-2,6-diaminopimelate (DAP), an intermediate involved in the bacterial biosynthesis of lysine and meso-diaminopimelic acid, an essential component of bacterial cell walls. In Aromatoleum aromaticum (strain DSM 19018 / LMG 30748 / EbN1) (Azoarcus sp. (strain EbN1)), this protein is Succinyl-diaminopimelate desuccinylase.